The following is a 509-amino-acid chain: ATP synthase subunit alpha (509 aa).

169 to 176 provides a ligand contact to ATP; that stretch reads GDRQTGKT.

The protein belongs to the ATPase alpha/beta chains family. As to quaternary structure, F-type ATPases have 2 components, CF(1) - the catalytic core - and CF(0) - the membrane proton channel. CF(1) has five subunits: alpha(3), beta(3), gamma(1), delta(1), epsilon(1). CF(0) has four main subunits: a(1), b(1), b'(1) and c(9-12).

It is found in the cell inner membrane. It catalyses the reaction ATP + H2O + 4 H(+)(in) = ADP + phosphate + 5 H(+)(out). Produces ATP from ADP in the presence of a proton gradient across the membrane. The alpha chain is a regulatory subunit. The polypeptide is ATP synthase subunit alpha (Erythrobacter litoralis (strain HTCC2594)).